The sequence spans 136 residues: Glutaredoxin-C7 (136 aa).

A Glutaredoxin domain is found at 29-135; the sequence is LLRIESLASE…PLLKDAGALW (107 aa). Cysteine 49 and cysteine 52 are disulfide-bonded. The short motif at 133–136 is the Responsive for interaction with TGA factors element; that stretch reads ALWL.

The protein belongs to the glutaredoxin family. CC-type subfamily. As to quaternary structure, interacts with TGA2, TGA3, TGA7 and PAN. Interacts with TGA9 and TGA10 in the nucleus. As to expression, highly expressed in inflorescences, roots, and siliques. Expressed at lower levels in mature flowers.

The protein localises to the cytoplasm. It is found in the nucleus. Its function is as follows. Has a glutathione-disulfide oxidoreductase activity in the presence of NADPH and glutathione reductase. Reduces low molecular weight disulfides and proteins. Involved in flower development as a regulator of petal primorida initiation and further petal morphogenesis. May mediate post-translational modifications of target proteins required for normal petal organ initiation and morphogenesis. ROXY1/TGA protein interactions can occur in vivo and support their biological relevance in petal development. May be involved in the regulation of the floral regulator class C gene AG (AGAMOUS). This chain is Glutaredoxin-C7 (GRXC7), found in Arabidopsis thaliana (Mouse-ear cress).